The following is a 98-amino-acid chain: DNA-directed RNA polymerase subunit Rpo11 (98 aa).

The protein belongs to the archaeal Rpo11/eukaryotic RPB11/RPC19 RNA polymerase subunit family. As to quaternary structure, part of the RNA polymerase complex.

It localises to the cytoplasm. It carries out the reaction RNA(n) + a ribonucleoside 5'-triphosphate = RNA(n+1) + diphosphate. Functionally, DNA-dependent RNA polymerase (RNAP) catalyzes the transcription of DNA into RNA using the four ribonucleoside triphosphates as substrates. This is DNA-directed RNA polymerase subunit Rpo11 from Korarchaeum cryptofilum (strain OPF8).